The following is a 250-amino-acid chain: L-cystine transport system ATP-binding protein TcyN (250 aa).

Positions 4–244 (IEVKNLVKKF…PEQPRTRQFL (241 aa)) constitute an ABC transporter domain. Residue 36–43 (GPSGSGKT) participates in ATP binding.

It belongs to the ABC transporter superfamily. The complex is composed of two ATP-binding proteins (TcyN), two transmembrane proteins (TcyL) and a solute-binding protein (TcyJ).

Its subcellular location is the cell inner membrane. It catalyses the reaction L-cystine(out) + ATP + H2O = L-cystine(in) + ADP + phosphate + H(+). It carries out the reaction D-cystine(out) + ATP + H2O = D-cystine(in) + ADP + phosphate + H(+). The TcyJLN system is inhibited by L-cystine, L-cysteine, DL-2,6-diaminopimelic acid and L-cystathionine, and is stimulated by D-cysteine. Functionally, part of the ABC transporter complex TcyJLN involved in L-cystine import. This high affinity cystine transporter is involved in resistance to oxidative stress by forming a L-cysteine/L-cystine shuttle system with the EamA transporter, which exports L-cysteine as reducing equivalents to the periplasm to prevent the cells from oxidative stress. Exported L-cysteine can reduce the periplasmic hydrogen peroxide to water, and then generated L-cystine is imported back into the cytoplasm via the TcyJLN complex. Functions at low cystine concentrations. The system can also transport L-cysteine, diaminopimelic acid (DAP), djenkolate, lanthionine, D-cystine, homocystine, and it mediates accumulation of the toxic compounds L-selenaproline (SCA) and L-selenocystine (SeCys). Could also facilitate threonine efflux. Responsible for energy coupling to the transport system. The polypeptide is L-cystine transport system ATP-binding protein TcyN (Escherichia coli (strain K12)).